The following is a 395-amino-acid chain: Probable G-protein coupled receptor npr-29 (395 aa).

The next 4 membrane-spanning stretches (helical) occupy residues 38–58, 66–86, 89–109, and 148–168; these read VVGF…LFAP, ILFY…AMLL, IELV…YLIF, and AIIQ…PVFA. N-linked (GlcNAc...) asparagine glycosylation is present at N180. The next 3 helical transmembrane spans lie at 202 to 222, 252 to 272, and 287 to 307; these read FWFN…GIIY, VITT…PYWV, and IIII…AYPL.

Belongs to the G-protein coupled receptor 1 family.

Its subcellular location is the cell membrane. Functionally, not known. Putative receptor. This chain is Probable G-protein coupled receptor npr-29, found in Caenorhabditis elegans.